A 419-amino-acid polypeptide reads, in one-letter code: Fumarylacetoacetase (419 aa).

The residue at position 2 (S2) is an N-acetylserine. Phosphoserine occurs at positions 84 and 92. D126 lines the Ca(2+) pocket. Residue Y128 participates in substrate binding. Residue H133 is the Proton acceptor of the active site. R142 provides a ligand contact to substrate. The Ca(2+) site is built by E199, E201, and D233. D233 provides a ligand contact to Mg(2+). Residues Q240 and Y244 each coordinate substrate. Residues K253 and T257 each coordinate Mg(2+). The residue at position 309 (S309) is a Phosphoserine. Residue T350 participates in substrate binding. Phosphoserine is present on S417.

This sequence belongs to the FAH family. Homodimer. It depends on Ca(2+) as a cofactor. Requires Mg(2+) as cofactor. As to expression, mainly in liver and kidney.

The enzyme catalyses 4-fumarylacetoacetate + H2O = acetoacetate + fumarate + H(+). Its pathway is amino-acid degradation; L-phenylalanine degradation; acetoacetate and fumarate from L-phenylalanine: step 6/6. The chain is Fumarylacetoacetase (Fah) from Mus musculus (Mouse).